A 441-amino-acid chain; its full sequence is Protein C-ets-1 (441 aa).

N6-acetyllysine; alternate is present on residues Lys8 and Lys15. Residues Lys8 and Lys15 each participate in a glycyl lysine isopeptide (Lys-Gly) (interchain with G-Cter in SUMO2); alternate cross-link. Lys15 participates in a covalent cross-link: Glycyl lysine isopeptide (Lys-Gly) (interchain with G-Cter in SUMO); alternate. Thr38 carries the phosphothreonine; by MAPK modification. Residues 51-136 form the PNT domain; that stretch reads ATFSGFTKEQ…EHLEILQKED (86 aa). The segment at 130–243 is activation domain; required for transcription activation; that stretch reads EILQKEDVKP…DNMCMGRASR (114 aa). Lys138 participates in a covalent cross-link: Glycyl lysine isopeptide (Lys-Gly) (interchain with G-Cter in SUMO2). The residue at position 223 (Tyr223) is a Phosphotyrosine. Lys227 participates in a covalent cross-link: Glycyl lysine isopeptide (Lys-Gly) (interchain with G-Cter in SUMO). A phosphoserine mark is found at Ser251 and Ser254. Thr265 is modified (phosphothreonine). Ser267, Ser270, Ser282, and Ser285 each carry phosphoserine. The segment at 304-312 is helix HI-1; it reads FKDYVRDRA. Lys305 bears the N6-acetyllysine mark. The tract at residues 323-330 is helix HI-2; the sequence is AAALAGYT. Residues 335–415 constitute a DNA-binding region (ETS); sequence IQLWQFLLEL…AGKRYVYRFV (81 aa). The helix H4 stretch occupies residues 418-422; that stretch reads LQSLL. The segment at 426-432 is helix H5; the sequence is PEELHAM.

Belongs to the ETS family. In terms of assembly, binds DNA as a homodimer; homodimerization is required for transcription activation. Interacts with MAF and MAFB. Interacts with PAX5; the interaction alters DNA-binding properties. Interacts with DAXX. Interacts with UBE2I. Interacts with SP100; the interaction is direct and modulates ETS1 transcriptional activity. Post-translationally, sumoylated on Lys-15 and Lys-227, preferentially with SUMO2; which inhibits transcriptional activity. In terms of processing, ubiquitinated; which induces proteasomal degradation. Phosphorylation at Ser-251, Ser-282 and Ser-285 by CaMK2/CaMKII in response to calcium signaling decreases affinity for DNA: an increasing number of phosphoserines causes DNA-binding to become progressively weaker.

It is found in the nucleus. The protein resides in the cytoplasm. Its activity is regulated as follows. Autoinhibited by a module composed of four alpha helices (HI-1, HI-2, H4, and H5) that flank the DNA-binding ETS domain, reducing the affinity for DNA. Phosphorylation by CaMK2/CaMKII in response to calcium signaling decreases affinity for DNA. In terms of biological role, transcription factor. Directly controls the expression of cytokine and chemokine genes in a wide variety of different cellular contexts. May control the differentiation, survival and proliferation of lymphoid cells. May also regulate angiogenesis through regulation of expression of genes controlling endothelial cell migration and invasion. The polypeptide is Protein C-ets-1 (Ets1) (Rattus norvegicus (Rat)).